The primary structure comprises 715 residues: MSSSKALIKTLIKNPTRIKSKSQAKQLHAQFIRTQSLSHTSASIVISIYTNLKLLHEALLLFKTLKSPPVLAWKSVIRCFTDQSLFSKALASFVEMRASGRCPDHNVFPSVLKSCTMMMDLRFGESVHGFIVRLGMDCDLYTGNALMNMYAKLLGMGSKISVGNVFDEMPQRTSNSGDEDVKAETCIMPFGIDSVRRVFEVMPRKDVVSYNTIIAGYAQSGMYEDALRMVREMGTTDLKPDSFTLSSVLPIFSEYVDVIKGKEIHGYVIRKGIDSDVYIGSSLVDMYAKSARIEDSERVFSRLYCRDGISWNSLVAGYVQNGRYNEALRLFRQMVTAKVKPGAVAFSSVIPACAHLATLHLGKQLHGYVLRGGFGSNIFIASALVDMYSKCGNIKAARKIFDRMNVLDEVSWTAIIMGHALHGHGHEAVSLFEEMKRQGVKPNQVAFVAVLTACSHVGLVDEAWGYFNSMTKVYGLNQELEHYAAVADLLGRAGKLEEAYNFISKMCVEPTGSVWSTLLSSCSVHKNLELAEKVAEKIFTVDSENMGAYVLMCNMYASNGRWKEMAKLRLRMRKKGLRKKPACSWIEMKNKTHGFVSGDRSHPSMDKINEFLKAVMEQMEKEGYVADTSGVLHDVDEEHKRELLFGHSERLAVAFGIINTEPGTTIRVTKNIRICTDCHVAIKFISKITEREIIVRDNSRFHHFNRGNCSCGDYW.

PPR repeat units lie at residues 38-68 (SHTS…LKSP), 69-103 (PVLA…GRCP), 104-138 (DHNV…GMDC), 139-172 (DLYT…MPQR), 206-240 (DVVS…DLKP), 241-275 (DSFT…GIDS), 276-306 (DVYI…LYCR), 307-341 (DGIS…KVKP), 342-376 (GAVA…GFGS), 377-407 (NIFI…MNVL), 408-442 (DEVS…GVKP), 443-473 (NQVA…MTKV), and 479-509 (ELEH…MCVE). The interval 514 to 589 (VWSTLLSSCS…KPACSWIEMK (76 aa)) is type E motif. The segment at 590-620 (NKTHGFVSGDRSHPSMDKINEFLKAVMEQME) is type E(+) motif. A type DYW motif region spans residues 621–715 (KEGYVADTSG…RGNCSCGDYW (95 aa)).

It belongs to the PPR family. PCMP-H subfamily.

This chain is Putative pentatricopeptide repeat-containing protein At3g23330 (PCMP-H32), found in Arabidopsis thaliana (Mouse-ear cress).